A 534-amino-acid polypeptide reads, in one-letter code: UDP-glucuronosyltransferase 2A3 (534 aa).

The signal sequence occupies residues 1-18 (MVSEKCVAAFFLLQLCWA). Topologically, residues 19–493 (GCGFCSKVLV…SWFQYHSLDV (475 aa)) are extracellular. Residue asparagine 102 is glycosylated (N-linked (GlcNAc...) asparagine). Lysine 135 is subject to N6-succinyllysine. Residue asparagine 204 is glycosylated (N-linked (GlcNAc...) asparagine). A helical membrane pass occupies residues 494-514 (IGFLLLCVVTLTFIITKFCLF). Residues 515 to 534 (VCQKLYMKESKKMGNRKKKN) are Cytoplasmic-facing.

This sequence belongs to the UDP-glycosyltransferase family. Highly expressed in liver, with lower levels in duodenum and jejunum.

The protein resides in the membrane. It catalyses the reaction glucuronate acceptor + UDP-alpha-D-glucuronate = acceptor beta-D-glucuronoside + UDP + H(+). Its function is as follows. UDP-glucuronosyltransferases catalyze phase II biotransformation reactions in which lipophilic substrates are conjugated with glucuronic acid to increase water solubility and enhance excretion. They are of major importance in the conjugation and subsequent elimination of potentially toxic xenobiotics and endogenous compounds. The polypeptide is UDP-glucuronosyltransferase 2A3 (Ugt2a3) (Mus musculus (Mouse)).